We begin with the raw amino-acid sequence, 300 residues long: Platelet-derived growth factor D (300 aa).

Residues 1-114 enclose the CUB domain; the sequence is QVTGNGHVQS…PGFKIYYSFV (114 aa). Cysteines 53 and 75 form a disulfide. N-linked (GlcNAc...) asparagine glycosylation is present at Asn-220.

This sequence belongs to the PDGF/VEGF growth factor family. As to quaternary structure, homodimer; disulfide-linked. Interacts with PDGFRB homodimers, and with heterodimers formed by PDGFRA and PDGFRB. Activated by proteolytic cleavage. Proteolytic removal of the N-terminal CUB domain releasing the core domain is necessary for unmasking the receptor-binding epitopes of the core domain. Cleavage after Arg-191 or Arg-193 by urokinase plasminogen activator gives rise to the active form.

Its subcellular location is the secreted. In terms of biological role, growth factor that plays an essential role in the regulation of embryonic development, cell proliferation, cell migration, survival and chemotaxis. Potent mitogen for cells of mesenchymal origin. Plays an important role in wound healing. Induces macrophage recruitment, increased interstitial pressure, and blood vessel maturation during angiogenesis. Can initiate events that lead to a mesangial proliferative glomerulonephritis, including influx of monocytes and macrophages and production of extracellular matrix. This Oryctolagus cuniculus (Rabbit) protein is Platelet-derived growth factor D (PDGFD).